Reading from the N-terminus, the 349-residue chain is MTQKNASSASPLSYKDAGVDIDAGDALIERIKPLAKKTMREGVLAGIGGFGALFEVPKRYKEPVLVSGTDGVGTKLKLAFEWNMHDTVGIDLVAMSVNDVLVQGAEPLFFLDYFACGKLDVDTAAAVVGGVAKGCELSGCALIGGETAEMPGMYPPGEYDLAGFCVGAVEKSKILTGVAIKPGDVVMGLASSGVHSNGFSLVRKCIERAGANAPATLDGKPFKQALMEPTRLYVKNVLAALAAHPIKALAHITGGGLLENIPRVLPEGTAAHLTKGSWPQTELFAWLQKTAGIDDFEMNRTFNNGIGMVVVIDASQAAACAATLRAAGEAVYVIGVIAARGDDAAVLVR.

This sequence belongs to the AIR synthase family.

Its subcellular location is the cytoplasm. It catalyses the reaction 2-formamido-N(1)-(5-O-phospho-beta-D-ribosyl)acetamidine + ATP = 5-amino-1-(5-phospho-beta-D-ribosyl)imidazole + ADP + phosphate + H(+). It functions in the pathway purine metabolism; IMP biosynthesis via de novo pathway; 5-amino-1-(5-phospho-D-ribosyl)imidazole from N(2)-formyl-N(1)-(5-phospho-D-ribosyl)glycinamide: step 2/2. The polypeptide is Phosphoribosylformylglycinamidine cyclo-ligase (Albidiferax ferrireducens (strain ATCC BAA-621 / DSM 15236 / T118) (Rhodoferax ferrireducens)).